The chain runs to 506 residues: NAD(P)H-quinone oxidoreductase subunit 2 (506 aa).

13 helical membrane-spanning segments follow: residues 14–34 (AIIP…VDLA), 42–62 (WAPI…ALQW), 79–99 (LAIS…LISW), 108–128 (PIGE…LLCG), 132–152 (LISV…LSGY), 167–187 (LLVG…LYGL), 206–226 (FITS…IAAV), 240–260 (PTPV…AFAI), 276–296 (LLFT…ALAQ), 302–322 (MLAY…VSGT), 330–350 (VLYL…VILF), 374–394 (LGLS…GFFG), and 409–429 (LLVI…ISVI).

The protein belongs to the complex I subunit 2 family. In terms of assembly, NDH-1 can be composed of about 15 different subunits; different subcomplexes with different compositions have been identified which probably have different functions.

The protein localises to the cellular thylakoid membrane. It carries out the reaction a plastoquinone + NADH + (n+1) H(+)(in) = a plastoquinol + NAD(+) + n H(+)(out). The enzyme catalyses a plastoquinone + NADPH + (n+1) H(+)(in) = a plastoquinol + NADP(+) + n H(+)(out). Functionally, NDH-1 shuttles electrons from an unknown electron donor, via FMN and iron-sulfur (Fe-S) centers, to quinones in the respiratory and/or the photosynthetic chain. The immediate electron acceptor for the enzyme in this species is believed to be plastoquinone. Couples the redox reaction to proton translocation, and thus conserves the redox energy in a proton gradient. Cyanobacterial NDH-1 also plays a role in inorganic carbon-concentration. The protein is NAD(P)H-quinone oxidoreductase subunit 2 of Prochlorococcus marinus (strain MIT 9215).